The sequence spans 641 residues: ATP-dependent zinc metalloprotease FtsH 2 (641 aa).

Residues 1 to 100 (MLAYYVSVNQ…IDVKVIHNFW (100 aa)) lie on the Periplasmic side of the membrane. Residues 101–121 (GQAFLSVLPFLLFILALYFLF) traverse the membrane as a helical segment. The Cytoplasmic portion of the chain corresponds to 122–641 (RQQIRMAGRG…LLPGLEGAPA (520 aa)). 193–200 (GPPGTGKT) lines the ATP pocket. Residue His-415 coordinates Zn(2+). The active site involves Glu-416. Residues His-419 and Asp-491 each contribute to the Zn(2+) site. The segment at 593–641 (KTGKMTNPPSKNSSPVSNGGEASSTKSPARQEETTKDGGLLPGLEGAPA) is disordered. 2 stretches are compositionally biased toward low complexity: residues 599-610 (NPPSKNSSPVSN) and 630-641 (GGLLPGLEGAPA).

This sequence in the central section; belongs to the AAA ATPase family. In the C-terminal section; belongs to the peptidase M41 family. Homohexamer. The cofactor is Zn(2+).

The protein localises to the cell inner membrane. Acts as a processive, ATP-dependent zinc metallopeptidase for both cytoplasmic and membrane proteins. Plays a role in the quality control of integral membrane proteins. The polypeptide is ATP-dependent zinc metalloprotease FtsH 2 (Methylacidiphilum infernorum (isolate V4) (Methylokorus infernorum (strain V4))).